A 203-amino-acid polypeptide reads, in one-letter code: Small ribosomal subunit protein uS4 (203 aa).

The 73-residue stretch at 92-164 folds into the S4 RNA-binding domain; it reads TRLDSVVYLL…LEENRIRNVP (73 aa).

It belongs to the universal ribosomal protein uS4 family. Part of the 30S ribosomal subunit. Contacts protein S5. The interaction surface between S4 and S5 is involved in control of translational fidelity.

In terms of biological role, one of the primary rRNA binding proteins, it binds directly to 16S rRNA where it nucleates assembly of the body of the 30S subunit. With S5 and S12 plays an important role in translational accuracy. This chain is Small ribosomal subunit protein uS4, found in Opitutus terrae (strain DSM 11246 / JCM 15787 / PB90-1).